A 295-amino-acid chain; its full sequence is GTPase Era (295 aa).

An Era-type G domain is found at 5–172 (YCGYAAIIGR…EQAVHQLMPE (168 aa)). Residues 13 to 20 (GRPNVGKS) form a G1 region. 13–20 (GRPNVGKS) provides a ligand contact to GTP. The G2 stretch occupies residues 39-43 (QTTRY). The G3 stretch occupies residues 60–63 (DTPG). GTP is bound by residues 60–64 (DTPGL) and 121–124 (NKVD). Residues 121–124 (NKVD) are G4. Residues 151–153 (LSA) form a G5 region. The KH type-2 domain maps to 203 to 279 (LGQEIPYSLA…FLQLWVKVKS (77 aa)).

The protein belongs to the TRAFAC class TrmE-Era-EngA-EngB-Septin-like GTPase superfamily. Era GTPase family. As to quaternary structure, monomer.

It is found in the cytoplasm. It localises to the cell inner membrane. Its function is as follows. An essential GTPase that binds both GDP and GTP, with rapid nucleotide exchange. Plays a role in 16S rRNA processing and 30S ribosomal subunit biogenesis and possibly also in cell cycle regulation and energy metabolism. The polypeptide is GTPase Era (Coxiella burnetii (strain CbuG_Q212) (Coxiella burnetii (strain Q212))).